The sequence spans 391 residues: Decapping nuclease RAI1 (391 aa).

An a divalent metal cation-binding site is contributed by Glu174. Substrate is bound at residue Glu223. 3 residues coordinate a divalent metal cation: Asp225, Glu244, and Leu245. Residues Lys246 and Gln270 each contribute to the substrate site.

This sequence belongs to the DXO/Dom3Z family. As to quaternary structure, interacts with RAT1; the interaction is direct, stabilizes RAT1 protein structure and stimulates its exoribonuclease activity. The interaction also stimulates RAI1 pyrophosphohydrolase activity, probably by recruiting it to mRNA substrates. A divalent metal cation is required as a cofactor.

The protein localises to the nucleus. It carries out the reaction a 5'-end NAD(+)-phospho-ribonucleoside in mRNA + H2O = a 5'-end phospho-ribonucleoside in mRNA + NAD(+) + H(+). The enzyme catalyses a 5'-end (N(7)-methyl 5'-triphosphoguanosine)-ribonucleoside-ribonucleotide in mRNA + H2O = a (N(7)-methyl 5'-triphosphoguanosine)-nucleoside + a 5'-end phospho-ribonucleoside in mRNA + H(+). It catalyses the reaction a 5'-end triphospho-ribonucleoside in mRNA + H2O = a 5'-end phospho-ribonucleoside in mRNA + diphosphate + H(+). Its function is as follows. Decapping enzyme for NAD-capped RNAs: specifically hydrolyzes the nicotinamide adenine dinucleotide (NAD) cap from a subset of RNAs by removing the entire NAD moiety from the 5'-end of an NAD-capped RNA. The NAD-cap is present at the 5'-end of some RNAs and snoRNAs. In contrast to the canonical 5'-end N7 methylguanosine (m7G) cap, the NAD cap promotes mRNA decay. Also acts as a non-canonical decapping enzyme that removes the entire cap structure of m7G capped or incompletely capped RNAs. Has decapping activity toward incomplete 5'-end m7G cap mRNAs such as unmethylated 5'-end-capped RNA (cap0), while it has no activity toward 2'-O-ribose methylated m7G cap (cap1). Also possesses RNA 5'-pyrophosphohydrolase activity by hydrolyzing the 5'-end triphosphate to release pyrophosphates. Stimulates exoribonuclease activity of Rat1, allowing it to degrade RNAs with stable secondary structure more effectively. In Candida albicans (strain SC5314 / ATCC MYA-2876) (Yeast), this protein is Decapping nuclease RAI1.